Here is a 336-residue protein sequence, read N- to C-terminus: UPF0104 membrane protein MJ1595 (336 aa).

Transmembrane regions (helical) follow at residues 9–29, 40–60, 68–88, 127–147, 154–174, 223–243, 245–265, 285–305, and 306–326; these read STIL…YIGL, NPEY…ILSA, ILGY…GLFI, VLDT…FVVT, YLIL…YLIA, WEVV…ILKL, LLFL…VYLI, VMIL…AVTL, and LDRL…MLII.

This sequence belongs to the UPF0104 family.

It is found in the cell membrane. The polypeptide is UPF0104 membrane protein MJ1595 (Methanocaldococcus jannaschii (strain ATCC 43067 / DSM 2661 / JAL-1 / JCM 10045 / NBRC 100440) (Methanococcus jannaschii)).